The sequence spans 351 residues: Fe(3+) ions import ATP-binding protein FbpC (351 aa).

The ABC transporter domain maps to 7–237; it reads VVLKNVCKRF…PSSMFMANFM (231 aa). 39 to 46 provides a ligand contact to ATP; that stretch reads GPSGCGKT.

The protein belongs to the ABC transporter superfamily. Fe(3+) ion importer (TC 3.A.1.10) family. The complex is composed of two ATP-binding proteins (FbpC), two transmembrane proteins (FbpB) and a solute-binding protein (FbpA).

It is found in the cell inner membrane. The catalysed reaction is Fe(3+)(out) + ATP + H2O = Fe(3+)(in) + ADP + phosphate + H(+). Functionally, part of the ABC transporter complex FbpABC involved in Fe(3+) ions import. Responsible for energy coupling to the transport system. The sequence is that of Fe(3+) ions import ATP-binding protein FbpC from Photobacterium profundum (strain SS9).